The chain runs to 601 residues: Elongation factor 4 (601 aa).

The tr-type G domain occupies 7-189 (SHIRNFSIIA…SIVQLVPPPQ (183 aa)). GTP contacts are provided by residues 19-24 (DHGKST) and 136-139 (NKID).

This sequence belongs to the TRAFAC class translation factor GTPase superfamily. Classic translation factor GTPase family. LepA subfamily.

Its subcellular location is the cell inner membrane. The enzyme catalyses GTP + H2O = GDP + phosphate + H(+). In terms of biological role, required for accurate and efficient protein synthesis under certain stress conditions. May act as a fidelity factor of the translation reaction, by catalyzing a one-codon backward translocation of tRNAs on improperly translocated ribosomes. Back-translocation proceeds from a post-translocation (POST) complex to a pre-translocation (PRE) complex, thus giving elongation factor G a second chance to translocate the tRNAs correctly. Binds to ribosomes in a GTP-dependent manner. This Trichodesmium erythraeum (strain IMS101) protein is Elongation factor 4.